The following is a 520-amino-acid chain: Phosphoenolpyruvate carboxykinase (ATP) (520 aa).

Substrate-binding residues include arginine 61, phenylalanine 196, and lysine 202. Residues lysine 202, histidine 222, and 238-246 contribute to the ATP site; that span reads GLSGTGKTT. Positions 202 and 222 each coordinate Mn(2+). Aspartate 259 is a binding site for Mn(2+). ATP contacts are provided by residues glutamate 287, arginine 324, 443-444, and threonine 449; that span reads RI. Residue arginine 324 participates in substrate binding.

It belongs to the phosphoenolpyruvate carboxykinase (ATP) family. Requires Mn(2+) as cofactor.

It is found in the cytoplasm. It catalyses the reaction oxaloacetate + ATP = phosphoenolpyruvate + ADP + CO2. It participates in carbohydrate biosynthesis; gluconeogenesis. Its function is as follows. Involved in the gluconeogenesis. Catalyzes the conversion of oxaloacetate (OAA) to phosphoenolpyruvate (PEP) through direct phosphoryl transfer between the nucleoside triphosphate and OAA. In Amoebophilus asiaticus (strain 5a2), this protein is Phosphoenolpyruvate carboxykinase (ATP).